The chain runs to 83 residues: MSGSTGERSFADIITSIRYWIIHSITIPSLFIAGWLFVSTGLAYDVFGSPRPNEYFTESRQGIPLITGRFDPLEQLDEFSRSF.

The chain crosses the membrane as a helical span at residues 21-35 (IIHSITIPSLFIAGW). Position 23 (His-23) interacts with heme.

This sequence belongs to the PsbE/PsbF family. Heterodimer of an alpha subunit and a beta subunit. PSII is composed of 1 copy each of membrane proteins PsbA, PsbB, PsbC, PsbD, PsbE, PsbF, PsbH, PsbI, PsbJ, PsbK, PsbL, PsbM, PsbT, PsbX, PsbY, PsbZ, Psb30/Ycf12, at least 3 peripheral proteins of the oxygen-evolving complex and a large number of cofactors. It forms dimeric complexes. Heme b serves as cofactor.

The protein localises to the plastid. It is found in the chloroplast thylakoid membrane. Functionally, this b-type cytochrome is tightly associated with the reaction center of photosystem II (PSII). PSII is a light-driven water:plastoquinone oxidoreductase that uses light energy to abstract electrons from H(2)O, generating O(2) and a proton gradient subsequently used for ATP formation. It consists of a core antenna complex that captures photons, and an electron transfer chain that converts photonic excitation into a charge separation. The protein is Cytochrome b559 subunit alpha of Lotus japonicus (Lotus corniculatus var. japonicus).